The following is a 212-amino-acid chain: Prolactin (212 aa).

Positions 1–24 (MAQRKTNGSKLFMMVLYMVAACSA) are cleaved as a signal peptide. 2 cysteine pairs are disulfide-bonded: cysteine 70/cysteine 185 and cysteine 202/cysteine 212.

This sequence belongs to the somatotropin/prolactin family. Pituitary gland.

It is found in the secreted. In Dicentrarchus labrax (European seabass), this protein is Prolactin (prl).